We begin with the raw amino-acid sequence, 489 residues long: Aklavinone 12-hydroxylase DnrF (489 aa).

Residues Leu17 to Gly18, Glu37, Gln121, and Leu145 each bind FAD. Tyr224 serves as the catalytic Proton acceptor. Position 308 (Asp308) interacts with FAD. Gly317 provides a ligand contact to aklavinone. Disordered stretches follow at residues Val402 to His428 and Glu455 to Asn489. Residues Arg468–Met482 are compositionally biased toward low complexity.

Belongs to the PheA/TfdB FAD monooxygenase family. In terms of assembly, monomer. Requires FAD as cofactor.

The catalysed reaction is aklavinone + NADPH + O2 + H(+) = epsilon-rhodomycinone + NADP(+) + H2O. Its pathway is antibiotic biosynthesis; daunorubicin biosynthesis. The protein operates within antibiotic biosynthesis; carminomycin biosynthesis. It participates in antibiotic biosynthesis; rhodomycin biosynthesis. In terms of biological role, involved in the biosynthesis of the anthracyclines carminomycin, rhodomycin and daunorubicin (daunomycin) which are aromatic polyketide antibiotics that exhibit high cytotoxicity and are widely applied in the chemotherapy of a variety of cancers. Catalyzes the incorporation of a hydroxyl group at position C-11 of aklavinone, resulting in epsilon-rhodomycinone. It cannot accept substrates glycosylated at position C-7. It can also hydroxylate 11-deoxycarminomycinone and can use both NAD or NADP. This chain is Aklavinone 12-hydroxylase DnrF (dnrF), found in Streptomyces peucetius.